Reading from the N-terminus, the 243-residue chain is MNTSQDTIYAQAYENISDFQFDEKVAGVFNDMIRRSVPGYGQIINTLGDFANQYVTTDSNIYDLGCSLGAATLSIRRHIDNRNCKIIAVDNSESMIQRCRENLSAYVSETPVDLVCGDIRDIKIENASMVVLNFTMQFLAPKDRDSLLSNIYKGLRPGGILVLSEKLNFEDESIQSLLVDLHLDFKRANGYSELEISQKRSSLEHVMKPDTLEQHGARLKKQGFKHFNVWFQCFNFASMVAIK.

Residues tyrosine 40, 65–67 (GCS), 90–91 (DN), 118–119 (DI), asparagine 133, and arginine 200 each bind S-adenosyl-L-methionine.

The protein belongs to the class I-like SAM-binding methyltransferase superfamily. Cx-SAM synthase family. In terms of assembly, homodimer.

The enzyme catalyses prephenate + S-adenosyl-L-methionine = carboxy-S-adenosyl-L-methionine + 3-phenylpyruvate + H2O. In terms of biological role, catalyzes the conversion of S-adenosyl-L-methionine (SAM) to carboxy-S-adenosyl-L-methionine (Cx-SAM). This Shewanella sediminis (strain HAW-EB3) protein is Carboxy-S-adenosyl-L-methionine synthase.